We begin with the raw amino-acid sequence, 70 residues long: DNA-binding transcriptional activator AlpA (70 aa).

The H-T-H motif DNA-binding region spans 12 to 31; it reads LPAVIQKTGMARATIYDWLN.

Its function is as follows. Positive regulator of the expression of the slpA gene. When overexpressed, leads to suppression of the capsule overproduction and UV sensitivity phenotypes of cells mutant for the Lon ATP-dependent protease. Part of the cryptic P4-like prophage CP4-57. Overexpression of AlpA leads to excision of the CP4-57 prophage by IntA. This inactivates ssrA (the gene upstream of the prophage) that encodes tmRNA which is required to rescue stalled ribosomes in a process known as trans-translation. The chain is DNA-binding transcriptional activator AlpA from Escherichia coli (strain K12).